Reading from the N-terminus, the 255-residue chain is MIEKVLEMDDWKAYKIPHTVEIDGMVEETKTLIIEFKNKRKVLSTREGFKEVKYVGNHSIPVPFWDKVHNYKDYENQVLNKIGIKKEDIALLSTGANMDNLAVAKEEFDEFYVVAFTTAGAKHNAIRLGDEEADYIEKDFKTYKIVDGKIVPKEEIGTVNIILITNANLTDGAMARAIITITEAKTNAFQELNIRSTKHPELQATGTGTDNIVVVKGFGSGVDYTGGHTKMGEMIAKAVKRSVIEALIKQDKIKI.

This is an uncharacterized protein from Methanocaldococcus jannaschii (strain ATCC 43067 / DSM 2661 / JAL-1 / JCM 10045 / NBRC 100440) (Methanococcus jannaschii).